Here is a 522-residue protein sequence, read N- to C-terminus: Calcium-dependent protein kinase 14 (522 aa).

2 stretches are compositionally biased toward low complexity: residues 1–12 and 19–45; these read MGNCCPPGSSSE and SSGSSRPAGSAGAAASPATISPSAAPA. The interval 1 to 58 is disordered; sequence MGNCCPPGSSSEPDPPPASSGSSRPAGSAGAAASPATISPSAAPAPAKPPAPIGPVLG. The N-myristoyl glycine moiety is linked to residue G2. The Protein kinase domain occupies 68–326; that stretch reads YTVGKELGRG…AYDVLNHPWI (259 aa). ATP contacts are provided by residues 74–82 and K97; that span reads LGRGQFGVT. The active-site Proton acceptor is the D192. Residues 332 to 362 form an autoinhibitory domain region; that stretch reads APDTPLDNAVLGRLKQFRAMNQFKKAALRVI. EF-hand domains lie at 369 to 404, 405 to 440, 441 to 476, and 480 to 511; these read EEIRGLKEMFKSMDSDNSGTITVDELRKGLAKKGTK, LTEAEVQQLMEAADADGNGTIDYEEFITATMHMNRM, DREEHLYTAFQYFDKDNSGYITIEELEQALREKGLM, and EIKDIISEVDADNDGRINYTEFVAMMRKGDPE. 20 residues coordinate Ca(2+): D382, D384, S386, T388, E393, D418, D420, N422, T424, E429, D454, D456, S458, Y460, E465, D489, D491, D493, R495, and E500.

Belongs to the protein kinase superfamily. Ser/Thr protein kinase family. CDPK subfamily.

It localises to the membrane. It carries out the reaction L-seryl-[protein] + ATP = O-phospho-L-seryl-[protein] + ADP + H(+). The catalysed reaction is L-threonyl-[protein] + ATP = O-phospho-L-threonyl-[protein] + ADP + H(+). Its activity is regulated as follows. Activated by calcium. Autophosphorylation may play an important role in the regulation of the kinase activity. May play a role in signal transduction pathways that involve calcium as a second messenger. In Oryza sativa subsp. japonica (Rice), this protein is Calcium-dependent protein kinase 14.